Consider the following 201-residue polypeptide: UPF0301 protein Smed_0532 (201 aa).

It belongs to the UPF0301 (AlgH) family.

In Sinorhizobium medicae (strain WSM419) (Ensifer medicae), this protein is UPF0301 protein Smed_0532.